The sequence spans 208 residues: Uracil phosphoribosyltransferase (208 aa).

5-phospho-alpha-D-ribose 1-diphosphate is bound by residues R78, R103, and 130-138 (DPMFATGGT). Residues I193 and 198–200 (GDA) each bind uracil. D199 is a binding site for 5-phospho-alpha-D-ribose 1-diphosphate.

Belongs to the UPRTase family. The cofactor is Mg(2+).

It carries out the reaction UMP + diphosphate = 5-phospho-alpha-D-ribose 1-diphosphate + uracil. Its pathway is pyrimidine metabolism; UMP biosynthesis via salvage pathway; UMP from uracil: step 1/1. With respect to regulation, allosterically activated by GTP. In terms of biological role, catalyzes the conversion of uracil and 5-phospho-alpha-D-ribose 1-diphosphate (PRPP) to UMP and diphosphate. This chain is Uracil phosphoribosyltransferase, found in Campylobacter jejuni subsp. jejuni serotype O:6 (strain 81116 / NCTC 11828).